Reading from the N-terminus, the 481-residue chain is 5-hydroxytryptamine receptor 2B (481 aa).

At 1–56 (MALSYRVSELQSTIPEHILQSTFVHVISSNWSGLQTESIPEEMKQIVEEQGNKLHW) the chain is on the extracellular side. Asn-30 is a glycosylation site (N-linked (GlcNAc...) asparagine). The helical transmembrane segment at 57-79 (AALLILMVIIPTIGGNTLVILAV) threads the bilayer. Residues 80–90 (SLEKKLQYATN) lie on the Cytoplasmic side of the membrane. Residues 91–113 (YFLMSLAVADLLVGLFVMPIALL) traverse the membrane as a helical segment. Residues 114–129 (TIMFEAMWPLPLVLCP) are Extracellular-facing. Cys-128 and Cys-207 are oxidised to a cystine. The chain crosses the membrane as a helical span at residues 130 to 151 (AWLFLDVLFSTASIMHLCAISV). The ergotamine site is built by Asp-135 and Thr-140. Positions 152–154 (DRY) match the DRY motif; important for ligand-induced conformation changes motif. The Cytoplasmic portion of the chain corresponds to 152-171 (DRYIAIKKPIQANQYNSRAT). The helical transmembrane segment at 172–192 (AFIKITVVWLISIGIAIPVPI) threads the bilayer. At 193–216 (KGIETDVDNPNNITCVLTKERFGD) the chain is on the extracellular side. Leu-209 serves as a coordination point for ergotamine. Positions 212 to 215 (ERFG) match the [DE]RFG motif; may stabilize a conformation that preferentially activates signaling via beta-arrestin family members motif. Residues 217–239 (FMLFGSLAAFFTPLAIMIVTYFL) traverse the membrane as a helical segment. The Cytoplasmic segment spans residues 240–324 (TIHALQKKAY…TISNEQRASK (85 aa)). A helical transmembrane segment spans residues 325–345 (VLGIVFFLFLLMWCPFFITNI). Over 346 to 360 (TLVLCDSCNQTTLQM) the chain is Extracellular. Cys-350 and Cys-353 are disulfide-bonded. The chain crosses the membrane as a helical span at residues 361 to 382 (LLEIFVWIGYVSSGVNPLVYTL). Residues 376–380 (NPLVY) carry the NPxxY motif; important for ligand-induced conformation changes and signaling motif. The Cytoplasmic segment spans residues 383–481 (FNKTFRDAFG…DKTEEQVSYV (99 aa)). A lipid anchor (S-palmitoyl cysteine) is attached at Cys-397. The PDZ-binding signature appears at 479 to 481 (SYV).

It belongs to the G-protein coupled receptor 1 family. In terms of assembly, interacts (via C-terminus) with MPDZ. Ubiquitous. Detected in liver, kidney, heart, pulmonary artery, and intestine. Detected at lower levels in blood, placenta and brain, especially in cerebellum, occipital cortex and frontal cortex.

The protein localises to the cell membrane. It is found in the synapse. It localises to the synaptosome. Functionally, G-protein coupled receptor for 5-hydroxytryptamine (serotonin). Also functions as a receptor for various ergot alkaloid derivatives and psychoactive substances. Ligand binding causes a conformation change that triggers signaling via guanine nucleotide-binding proteins (G proteins) and modulates the activity of downstream effectors. HTR2B is coupled to G(q)/G(11) G alpha proteins and activates phospholipase C-beta, releasing diacylglycerol (DAG) and inositol 1,4,5-trisphosphate (IP3) second messengers that modulate the activity of phosphatidylinositol 3-kinase and promote the release of Ca(2+) ions from intracellular stores, respectively. Beta-arrestin family members inhibit signaling via G proteins and mediate activation of alternative signaling pathways. Plays a role in the regulation of dopamine and 5-hydroxytryptamine release, 5-hydroxytryptamine uptake and in the regulation of extracellular dopamine and 5-hydroxytryptamine levels, and thereby affects neural activity. May play a role in the perception of pain. Plays a role in the regulation of behavior, including impulsive behavior. Required for normal proliferation of embryonic cardiac myocytes and normal heart development. Protects cardiomyocytes against apoptosis. Plays a role in the adaptation of pulmonary arteries to chronic hypoxia. Plays a role in vasoconstriction. Required for normal osteoblast function and proliferation, and for maintaining normal bone density. Required for normal proliferation of the interstitial cells of Cajal in the intestine. The chain is 5-hydroxytryptamine receptor 2B from Homo sapiens (Human).